Consider the following 181-residue polypeptide: Transcriptional repressor NrdR (181 aa).

A zinc finger lies at 3–34 (CLFCQHTDTRVIDSRVSEDGATIRRRRECEAC). The 91-residue stretch at 49-139 (PVIIKKDGGR…VYRSFQDVAD (91 aa)) folds into the ATP-cone domain.

Belongs to the NrdR family. It depends on Zn(2+) as a cofactor.

Negatively regulates transcription of bacterial ribonucleotide reductase nrd genes and operons by binding to NrdR-boxes. The polypeptide is Transcriptional repressor NrdR (Xylella fastidiosa (strain M12)).